The following is a 45-amino-acid chain: Enterotoxin (45 aa).

One of 3 components (of 35, 45 and 105 kDa) of the enterotoxin.

Functionally, one of 3 components required for cytotoxicity (tested in African green monkey Vero cells); the complex is not hemolytic. The protein is Enterotoxin of Bacillus cereus.